The primary structure comprises 43 residues: Protein PsbN (43 aa).

The chain crosses the membrane as a helical span at residues 5 to 27 (TLIAISISGLLVSFTGYALYTAF).

It belongs to the PsbN family.

It is found in the plastid. The protein localises to the chloroplast thylakoid membrane. Its function is as follows. May play a role in photosystem I and II biogenesis. This is Protein PsbN from Phaseolus vulgaris (Kidney bean).